We begin with the raw amino-acid sequence, 149 residues long: Calmodulin (149 aa).

Position 2 is an N-acetylalanine (Ala-2). EF-hand domains lie at 8-43, 44-79, 81-116, and 117-149; these read EQIA…LGQN, PTEA…KMKD, DSEE…LGEK, and LTDE…MTAK. Asp-21, Asp-23, Asp-25, Thr-27, Glu-32, Asp-57, Asp-59, Asn-61, Thr-63, Glu-68, Asp-94, Asp-96, Asn-98, Tyr-100, and Glu-105 together coordinate Ca(2+). Lys-116 is modified (N6,N6,N6-trimethyllysine). Positions 130, 132, 134, 136, and 141 each coordinate Ca(2+).

The protein belongs to the calmodulin family.

Functionally, calmodulin acts as part of a calcium signal transduction pathway by mediating the control of a large number of enzymes, ion channels, aquaporins and other proteins through calcium-binding. Calcium-binding is required for the activation of calmodulin. Among the enzymes to be stimulated by the calmodulin-calcium complex are a number of protein kinases, such as myosin light-chain kinases and calmodulin-dependent protein kinase type II (CaMK2), and phosphatases. The sequence is that of Calmodulin (calm) from Electrophorus electricus (Electric eel).